Reading from the N-terminus, the 360-residue chain is Chorismate synthase (360 aa).

Position 47 (R47) interacts with NADP(+). FMN contacts are provided by residues 124–126 (RAS), G286, 301–305 (KPTAT), and R327.

This sequence belongs to the chorismate synthase family. As to quaternary structure, homotetramer. The cofactor is FMNH2.

The enzyme catalyses 5-O-(1-carboxyvinyl)-3-phosphoshikimate = chorismate + phosphate. It functions in the pathway metabolic intermediate biosynthesis; chorismate biosynthesis; chorismate from D-erythrose 4-phosphate and phosphoenolpyruvate: step 7/7. Functionally, catalyzes the anti-1,4-elimination of the C-3 phosphate and the C-6 proR hydrogen from 5-enolpyruvylshikimate-3-phosphate (EPSP) to yield chorismate, which is the branch point compound that serves as the starting substrate for the three terminal pathways of aromatic amino acid biosynthesis. This reaction introduces a second double bond into the aromatic ring system. This chain is Chorismate synthase, found in Synechococcus sp. (strain RCC307).